The sequence spans 240 residues: tRNA (guanine-N(7)-)-methyltransferase (240 aa).

Residues glutamate 70, glutamate 95, aspartate 122, and aspartate 145 each contribute to the S-adenosyl-L-methionine site. Aspartate 145 is a catalytic residue. Substrate-binding positions include lysine 149, aspartate 181, and 218–221; that span reads TKFE.

Belongs to the class I-like SAM-binding methyltransferase superfamily. TrmB family.

The catalysed reaction is guanosine(46) in tRNA + S-adenosyl-L-methionine = N(7)-methylguanosine(46) in tRNA + S-adenosyl-L-homocysteine. Its pathway is tRNA modification; N(7)-methylguanine-tRNA biosynthesis. Catalyzes the formation of N(7)-methylguanine at position 46 (m7G46) in tRNA. This is tRNA (guanine-N(7)-)-methyltransferase from Pseudomonas entomophila (strain L48).